Consider the following 1616-residue polypeptide: Vitellogenin-1 (1616 aa).

Residues 1 to 19 (MRSIIIASIVALAIAFSPA) form the signal peptide. The 666-residue stretch at 24 to 689 (FEPKIDYHYK…EKNSFLLKDL (666 aa)) folds into the Vitellogenin domain. A glycan (N-linked (GlcNAc...) asparagine) is linked at asparagine 1270. One can recognise a VWFD domain in the interval 1310-1479 (SVCKVQKNQI…SYLLKNEECE (170 aa)). 2 disulfide bridges follow: cysteine 1312–cysteine 1442 and cysteine 1334–cysteine 1478. The segment covering 1505–1514 (SFEETYDYEQ) has biased composition (acidic residues). The interval 1505-1531 (SFEETYDYEQENTNKKQKNQRSQKKSD) is disordered.

In terms of tissue distribution, expressed in the intestine of adult hermaphrodites.

It is found in the secreted. In terms of biological role, precursor of the egg-yolk proteins that are sources of nutrients during embryonic development. Together with other vitellogenins, may play a role in modulating life-span, acting via induction of autophagy and lysosomal lipolysis. The protein is Vitellogenin-1 (vit-1) of Caenorhabditis elegans.